The primary structure comprises 338 residues: Phenylalanine--tRNA ligase alpha subunit (338 aa).

E252 contacts Mg(2+).

This sequence belongs to the class-II aminoacyl-tRNA synthetase family. Phe-tRNA synthetase alpha subunit type 1 subfamily. Tetramer of two alpha and two beta subunits. It depends on Mg(2+) as a cofactor.

The protein resides in the cytoplasm. It carries out the reaction tRNA(Phe) + L-phenylalanine + ATP = L-phenylalanyl-tRNA(Phe) + AMP + diphosphate + H(+). The protein is Phenylalanine--tRNA ligase alpha subunit of Pseudomonas aeruginosa (strain UCBPP-PA14).